The primary structure comprises 446 residues: Telomere-binding protein 51 kDa subunit (446 aa).

Belongs to the telombin family. Monomer.

It localises to the nucleus. Its subcellular location is the chromosome. The protein localises to the telomere. Its function is as follows. May function as protective capping of the single-stranded telomeric overhang. May also participate in telomere length regulation during DNA replication. Binds specifically to the T4G4-containing extension on the 3'strand and protects this region of the telomere from nuclease digestion and chemical modification. In Euplotes crassus, this protein is Telomere-binding protein 51 kDa subunit.